The primary structure comprises 238 residues: tRNA (guanine-N(7)-)-methyltransferase (238 aa).

Positions 68, 93, 120, and 143 each coordinate S-adenosyl-L-methionine. Asp-143 is an active-site residue. Substrate is bound by residues Lys-147, Asp-179, and 216–219 (TKFE).

Belongs to the class I-like SAM-binding methyltransferase superfamily. TrmB family. In terms of assembly, monomer.

The enzyme catalyses guanosine(46) in tRNA + S-adenosyl-L-methionine = N(7)-methylguanosine(46) in tRNA + S-adenosyl-L-homocysteine. Its pathway is tRNA modification; N(7)-methylguanine-tRNA biosynthesis. Catalyzes the formation of N(7)-methylguanine at position 46 (m7G46) in tRNA. The sequence is that of tRNA (guanine-N(7)-)-methyltransferase from Edwardsiella ictaluri (strain 93-146).